The sequence spans 702 residues: Polyribonucleotide nucleotidyltransferase (702 aa).

Mg(2+) contacts are provided by D485 and D491. Residues 552–611 (PRITTLKINPEKIRDVIGKGGATIRALTEETGTTIELEDDGTVKIASANGEATKEAIRRI) form the KH domain. The S1 motif domain maps to 621–689 (GTVYNGKVVR…RQGRVRLSMK (69 aa)).

It belongs to the polyribonucleotide nucleotidyltransferase family. Component of the RNA degradosome, which is a multiprotein complex involved in RNA processing and mRNA degradation. Requires Mg(2+) as cofactor.

It is found in the cytoplasm. It carries out the reaction RNA(n+1) + phosphate = RNA(n) + a ribonucleoside 5'-diphosphate. Functionally, involved in mRNA degradation. Catalyzes the phosphorolysis of single-stranded polyribonucleotides processively in the 3'- to 5'-direction. In Shewanella woodyi (strain ATCC 51908 / MS32), this protein is Polyribonucleotide nucleotidyltransferase.